A 470-amino-acid chain; its full sequence is ATP synthase subunit beta (470 aa).

ATP is bound at residue 157–164; sequence GGAGVGKT.

It belongs to the ATPase alpha/beta chains family. As to quaternary structure, F-type ATPases have 2 components, CF(1) - the catalytic core - and CF(0) - the membrane proton channel. CF(1) has five subunits: alpha(3), beta(3), gamma(1), delta(1), epsilon(1). CF(0) has three main subunits: a(1), b(2) and c(9-12). The alpha and beta chains form an alternating ring which encloses part of the gamma chain. CF(1) is attached to CF(0) by a central stalk formed by the gamma and epsilon chains, while a peripheral stalk is formed by the delta and b chains.

It localises to the cell inner membrane. It catalyses the reaction ATP + H2O + 4 H(+)(in) = ADP + phosphate + 5 H(+)(out). In terms of biological role, produces ATP from ADP in the presence of a proton gradient across the membrane. The catalytic sites are hosted primarily by the beta subunits. The protein is ATP synthase subunit beta of Geotalea daltonii (strain DSM 22248 / JCM 15807 / FRC-32) (Geobacter daltonii).